A 226-amino-acid polypeptide reads, in one-letter code: Lysoplasmalogenase TMEM86B (226 aa).

The Cytoplasmic portion of the chain corresponds to 1-23; that stretch reads MDAGKAGQTLKTHCSAQRPDVCR. The helical transmembrane segment at 24–40 threads the bilayer; sequence WLSPFILSCCVYFCLWI. Residues 41-46 lie on the Extracellular side of the membrane; it reads PEDQLS. The helical transmembrane segment at 47 to 67 threads the bilayer; it reads WFAALVKCLPVLCLAGFLWVM. The Cytoplasmic portion of the chain corresponds to 68–75; sequence SPSGGYTQ. Residues 76–93 form a helical membrane-spanning segment; it reads LLQGALVCSAVGDACLIW. Residues 94 to 100 are Extracellular-facing; sequence PAAFVPG. Residues 101–117 traverse the membrane as a helical segment; sequence MAAFATAHLLYVWAFGF. Residues 118-123 are Cytoplasmic-facing; that stretch reads SPLQPG. The helical transmembrane segment at 124–140 threads the bilayer; it reads LLLLIILAPGPYLSLVL. The Extracellular portion of the chain corresponds to 141 to 146; sequence QHLEPD. A helical transmembrane segment spans residues 147-163; that stretch reads MVLPVAAYGLILMAMLW. Over 164 to 171 the chain is Cytoplasmic; the sequence is RGLAQGGS. Residues 172–188 traverse the membrane as a helical segment; it reads AGWGALLFTLSDGVLAW. The Extracellular segment spans residues 189 to 199; that stretch reads DTFAQPLPHAH. The chain crosses the membrane as a helical span at residues 200-218; the sequence is LVIMTTYYAAQLLITLSAL. At 219–226 the chain is on the cytoplasmic side; the sequence is RSPVPKTD.

It belongs to the TMEM86 family. In terms of assembly, homodimer.

Its subcellular location is the endoplasmic reticulum membrane. It is found in the cytoplasm. The catalysed reaction is a 1-O-(1Z-alkenyl)-sn-glycero-3-phosphocholine + H2O = a 2,3-saturated aldehyde + sn-glycerol 3-phosphocholine. It carries out the reaction a 1-O-(1Z-alkenyl)-sn-glycero-3-phosphoethanolamine + H2O = a 2,3-saturated aldehyde + sn-glycero-3-phosphoethanolamine. Its activity is regulated as follows. Competitively inhibited by lysophosphatidic acid. Its function is as follows. Catalyzes the hydrolysis of the vinyl ether bond of choline or ethanolamine lysoplasmalogens, forming fatty aldehyde and glycerophosphocholine or glycerophosphoethanolamine, respectively and is specific for the sn-2-deacylated (lyso) form of plasmalogen. This is Lysoplasmalogenase TMEM86B (TMEM86B) from Homo sapiens (Human).